The sequence spans 1025 residues: MAADDIVGCYQVDKARRSLTNVESYPKVGEQLHGFTVQEKKHVPELHLTAVRLKHDKTDADYLHVAREDKNNVFGVGFKTNPPDATGVPHILEHTTLCGSEKYPVRDPFFKMLPRSLSNFMNAFTSADHTTYPFATTNQQDFQNLLSVYLDATLHPLLKEEDFRQEGWRLGPEDPRASDALDGKPEDVLFKGVVYNEMKGQISDANYLYYIKYRESIFPALNNSGGDPQYITDLTHKQLVEFSKRNYHPSNAKFLTYGDMPLSTHLKQIGDVLDGFGKGEADTSVKLPIDLSRGPSNVTVPGPIDTFADADKQYKTSTSWYLGDTSEVVETFSAGILSSLLLDGYGSPMYRALIESGLGSSFTPNTGLDTSGRVPVLSVGLTGVSEEDAPKVKEAIQKVYQDSLSAGFSDEKVQGFLHQLELALRHKTANFGIGVMEKTISSWFNGVDPMKELAWNDVINEFKRRYQQGGYLESLMQKYLMNDRCLTFTMVGTPTFHQELDQQEMVRKEKKLSQLVEQHGSMEKAISSLREQELQLLKTQEEAQHADLGCLPSLRVEDISREKERKPVRESKVDDVDVVWREAPTNGLTYFQALNAFEDLPDDLRLLMPLFNDSVMRLGTANKTMEQWEDLIKLKTGGVSSSAFHTSSPTELGKFNEGLQFSGFALDKNIPDMLEILTTLITETDFTSPYAPAMIQELLRLTTNGALDSVAASGHRFALNAAAAGLSRSFWVQEQQSGLAQLQATANLLRDAETSPERLAELIEKLRLIQSFAISKSSSLRVRMVCEPSSAHQNEVVLQKWLAGLPQIRSPTSVDARSMQQVSSKAFYDMPYKVYYSGLAMQTVPFVHKSSAPLSVLSQLLTHNYLHPEIREKGGAYGAAASNGPVKGIFALTSYRDPNPLNTLKVFQNSGIFARDRSWSERELNEAKLGIFQGLDAPVSVDEEGSRYFMSGVTHEMDQRWREQLLDVTARDVNEVAQTFLVDGPRQSVCLLGEKKDWAEDWDVRKLSMNAGEAEAYPEDASTTA.

H90 contributes to the Zn(2+) binding site. E93 (proton acceptor) is an active-site residue. H94 lines the Zn(2+) pocket. Residue E166 is part of the active site. Zn(2+) is bound at residue E197.

This sequence belongs to the peptidase M16 family. PreP subfamily. As to quaternary structure, monomer and homodimer; homodimerization is induced by binding of the substrate. Requires Zn(2+) as cofactor.

Its subcellular location is the mitochondrion intermembrane space. It localises to the mitochondrion matrix. Its function is as follows. Degrades mitochondrial transit peptides after their cleavage in the intermembrane space or in the matrix, and presequence peptides; clearance of these peptides is required to keep the presequence processing machinery running. Preferentially cleaves the N-terminal side of paired basic amino acid residues. Also degrades other unstructured peptides. May function as an ATP-dependent peptidase as opposed to a metalloendopeptidase. The protein is Presequence protease, mitochondrial (cym1) of Aspergillus oryzae (strain ATCC 42149 / RIB 40) (Yellow koji mold).